We begin with the raw amino-acid sequence, 175 residues long: Large ribosomal subunit protein uL10 (175 aa).

The protein belongs to the universal ribosomal protein uL10 family. As to quaternary structure, part of the ribosomal stalk of the 50S ribosomal subunit. The N-terminus interacts with L11 and the large rRNA to form the base of the stalk. The C-terminus forms an elongated spine to which L12 dimers bind in a sequential fashion forming a multimeric L10(L12)X complex.

Forms part of the ribosomal stalk, playing a central role in the interaction of the ribosome with GTP-bound translation factors. This Prochlorococcus marinus (strain MIT 9215) protein is Large ribosomal subunit protein uL10.